A 274-amino-acid chain; its full sequence is Formamidopyrimidine-DNA glycosylase (274 aa).

Pro2 (schiff-base intermediate with DNA) is an active-site residue. Glu3 (proton donor) is an active-site residue. The active-site Proton donor; for beta-elimination activity is Lys58. His91, Arg110, and Lys152 together coordinate DNA. An FPG-type zinc finger spans residues 237-271 (KVYGRKNLPCLVCENKIETVVIAGRHSAFCPHCQP). Arg261 acts as the Proton donor; for delta-elimination activity in catalysis.

This sequence belongs to the FPG family. In terms of assembly, monomer. Requires Zn(2+) as cofactor.

The catalysed reaction is Hydrolysis of DNA containing ring-opened 7-methylguanine residues, releasing 2,6-diamino-4-hydroxy-5-(N-methyl)formamidopyrimidine.. It catalyses the reaction 2'-deoxyribonucleotide-(2'-deoxyribose 5'-phosphate)-2'-deoxyribonucleotide-DNA = a 3'-end 2'-deoxyribonucleotide-(2,3-dehydro-2,3-deoxyribose 5'-phosphate)-DNA + a 5'-end 5'-phospho-2'-deoxyribonucleoside-DNA + H(+). In terms of biological role, involved in base excision repair of DNA damaged by oxidation or by mutagenic agents. Acts as a DNA glycosylase that recognizes and removes damaged bases. Has a preference for oxidized purines, such as 7,8-dihydro-8-oxoguanine (8-oxoG). Has AP (apurinic/apyrimidinic) lyase activity and introduces nicks in the DNA strand. Cleaves the DNA backbone by beta-delta elimination to generate a single-strand break at the site of the removed base with both 3'- and 5'-phosphates. This is Formamidopyrimidine-DNA glycosylase from Legionella pneumophila subsp. pneumophila (strain Philadelphia 1 / ATCC 33152 / DSM 7513).